The chain runs to 258 residues: 6-carboxyhexanoate--CoA ligase (258 aa).

Belongs to the BioW family. In terms of assembly, homodimer. Requires Mg(2+) as cofactor.

It catalyses the reaction heptanedioate + ATP + CoA = 6-carboxyhexanoyl-CoA + AMP + diphosphate. It functions in the pathway metabolic intermediate metabolism; pimeloyl-CoA biosynthesis; pimeloyl-CoA from pimelate: step 1/1. Its function is as follows. Catalyzes the transformation of pimelate into pimeloyl-CoA with concomitant hydrolysis of ATP to AMP. The polypeptide is 6-carboxyhexanoate--CoA ligase (Bacillus subtilis (strain BSn5)).